A 205-amino-acid chain; its full sequence is Non-specific lipid transfer protein GPI-anchored 21 (205 aa).

The N-terminal stretch at 1–27 (MNSNSFLISAALIFSLLSSNSPTSILA) is a signal peptide. Intrachain disulfides connect cysteine 33-cysteine 75, cysteine 44-cysteine 59, cysteine 60-cysteine 100, and cysteine 73-cysteine 109. N-linked (GlcNAc...) asparagine glycosylation is present at asparagine 89. Positions 116–182 (LPTPGPASFG…FAPPPPSSSP (67 aa)) are disordered. Residues 126–156 (PTTSPTDSQTSDPEGSASFRPPTSPTTSQTP) are compositionally biased toward low complexity. Serine 179 carries the GPI-anchor amidated serine lipid modification. Residues 180–205 (SSPSSSHSLKLSYLLFAFAFTIIKFI) constitute a propeptide, removed in mature form.

The protein belongs to the plant LTP family.

The protein localises to the cell membrane. Functionally, probable lipid transfer protein. In Arabidopsis thaliana (Mouse-ear cress), this protein is Non-specific lipid transfer protein GPI-anchored 21.